The chain runs to 167 residues: 3-isopropylmalate dehydratase small subunit (167 aa).

Belongs to the LeuD family. LeuD type 2 subfamily. In terms of assembly, heterodimer of LeuC and LeuD.

It carries out the reaction (2R,3S)-3-isopropylmalate = (2S)-2-isopropylmalate. It participates in amino-acid biosynthesis; L-leucine biosynthesis; L-leucine from 3-methyl-2-oxobutanoate: step 2/4. Catalyzes the isomerization between 2-isopropylmalate and 3-isopropylmalate, via the formation of 2-isopropylmaleate. The sequence is that of 3-isopropylmalate dehydratase small subunit from Wolinella succinogenes (strain ATCC 29543 / DSM 1740 / CCUG 13145 / JCM 31913 / LMG 7466 / NCTC 11488 / FDC 602W) (Vibrio succinogenes).